An 861-amino-acid polypeptide reads, in one-letter code: DNA mismatch repair protein MutS (861 aa).

609–616 serves as a coordination point for ATP; that stretch reads GPNMAGKS.

This sequence belongs to the DNA mismatch repair MutS family.

This protein is involved in the repair of mismatches in DNA. It is possible that it carries out the mismatch recognition step. This protein has a weak ATPase activity. In Borrelia hermsii (strain HS1 / DAH), this protein is DNA mismatch repair protein MutS.